We begin with the raw amino-acid sequence, 279 residues long: MAHDEQLWLTPRLQKAAALCNQTPAASDTPLWLGVDLGTCDVVSMVVDGNAQPVAVCLDWADVVRDGIVWDFFGAVTLVRRHLDTLEQQLGCRFTHAATSFPPGTDPRISINVLESAGLEVSHVLDEPTAVADLLALDNAGVVDIGGGTTGIAIVKQGKVTYSADEATGGHHISLTLAGNRRIPLEEAEQYKRSNAQEIWPVVKPVYEKMAEIVARHIEGQGIADLWLAGGSCMQPGVEALFRQRFPELQVHLPQHSLFMTPLAIANSGRAKAEGLYAS.

Belongs to the EutJ family.

It functions in the pathway amine and polyamine degradation; ethanolamine degradation. Functionally, may protect ethanolamine ammonia-lyase (EAL, eutB-eutC) from inhibition, may function in assembling the bacterial microcompartment and/or in refolding EAL, suggesting it may have chaperone activity. Overexpression of eutJ and eutS in E.coli leads to multiple BMC-like structures; eutS expression alone leads to 1 BMC-like structure per cell. In terms of biological role, expression of the eut operon allows this bacteria to use ethanolamine (EA) as a carbon, nitrogen and energy source. It relies on cobalamin (vitamin B12) both as a cofactor for the ethanolamine ammonia-lyase (EAL) activity and to induce the operon. EA enhances bacterial survival in macrophages in a concentration-dependent manner, suggesting it is an important nutrient during infection. In Salmonella typhimurium (strain LT2 / SGSC1412 / ATCC 700720), this protein is Ethanolamine utilization protein EutJ.